The chain runs to 1317 residues: Nucleoporin NUP145 (1317 aa).

Positions 1-16 (MFNKSVNSGFTFGNQN) are enriched in polar residues. A disordered region spans residues 1–36 (MFNKSVNSGFTFGNQNTSTPTSTPAQPSSSLQFPQK). The FG 1 repeat unit spans residues 12–13 (FG). Residues 17–30 (TSTPTSTPAQPSSS) show a composition bias toward low complexity. The stretch at 39-42 (GLFG) is one GLFG 1 repeat. The FG 2 repeat unit spans residues 79-80 (FG). Residues 89–92 (GLFG) form a GLFG 2 repeat. One copy of the FG 3 repeat lies at 106–107 (FG). The segment at 133-165 (QNGGLFGNSNNNNITSTTQNGGLFGKPTTTPAG) is disordered. GLFG repeat units follow at residues 136-139 (GLFG), 154-157 (GLFG), 168-171 (GLFG), and 181-184 (GLFG). Residues 139–164 (GNSNNNNITSTTQNGGLFGKPTTTPA) show a composition bias toward low complexity. Residues 193–196 (GIFG) form a GLFG 7; approximate repeat. A GLFG 8 repeat occupies 206-209 (GLFG). The interval 249–278 (TSSLSDVNGKSDAEPKPIENRRTYSFSSSV) is disordered. The span at 257 to 270 (GKSDAEPKPIENRR) shows a compositional bias: basic and acidic residues. Ser-273 is subject to Phosphoserine. The Bipartite nuclear localization signal motif lies at 369–385 (RKLKIDSNRSAAKKLKL). The interval 390–450 (PAITKKHMQD…NLNKQDGENT (61 aa)) is disordered. A required for autocatalytic cleavage region spans residues 398 to 523 (QDEQDSSENE…FGKIVIFRSS (126 aa)). Phosphoserine is present on residues Ser-403, Ser-404, and Ser-414. The segment covering 418–427 (IDRKENRDNN) has biased composition (basic and acidic residues). The segment covering 428-444 (LDNTYLNGKEQSNNLNK) has biased composition (polar residues). One can recognise a Peptidase S59 domain in the interval 458–605 (SFGYWCSPSP…GTWTFKVNHF (148 aa)). The nucleoporin RNA-binding motif (NRM) stretch occupies residues 460–604 (GYWCSPSPEQ…GGTWTFKVNH (145 aa)). Residues Ser-667, Ser-679, and Ser-689 each carry the phosphoserine modification. Thr-751 carries the phosphothreonine modification.

It belongs to the nucleoporin GLFG family. As to quaternary structure, component of the nuclear pore complex (NPC). NPC constitutes the exclusive means of nucleocytoplasmic transport. NPCs allow the passive diffusion of ions and small molecules and the active, nuclear transport receptor-mediated bidirectional transport of macromolecules such as proteins, RNAs, ribonucleoparticles (RNPs), and ribosomal subunits across the nuclear envelope. Due to its 8-fold rotational symmetry, all subunits are present with 8 copies or multiples thereof. NUP145C is part of the heptameric 0.5 MDa autoassembling NUP84 NPC subcomplex (NUP84, NUP85, NUP120, NUP133, NUP145C, SEC13 and SEH1). NUP145N may bind homomeric RNA and interacts through its FG repeats with karyopherins. Interacts with MLP1 and MLP2. In terms of processing, NUP145 is autocatalytically cleaved in NUP145N and NUP145C.

It is found in the nucleus. The protein resides in the nuclear pore complex. Its subcellular location is the nucleus membrane. Functionally, functions as a component of the nuclear pore complex (NPC). NPC components, collectively referred to as nucleoporins (NUPs), can play the role of both NPC structural components and of docking or interaction partners for transiently associated nuclear transport factors. Active directional transport is assured by both, a Phe-Gly (FG) repeat affinity gradient for these transport factors across the NPC and a transport cofactor concentration gradient across the nuclear envelope (GSP1 and GSP2 GTPases associated predominantly with GTP in the nucleus, with GDP in the cytoplasm). NUP145 is autocatalytically cleaved in vivo in 2 polypeptides which assume different functions in the NPC. NUP145N as one of the FG repeat nucleoporins participates in karyopherin interactions and contains part of the autocatalytic cleavage activity. NUP145C as part of the NUP84 complex is involved in nuclear poly(A)+ RNA and tRNA export. It is also required for normal NPC distribution (probably through interactions with MLP1 and MLP2) and NPC assembly, as well as for normal nuclear envelope organization. In Saccharomyces cerevisiae (strain ATCC 204508 / S288c) (Baker's yeast), this protein is Nucleoporin NUP145 (NUP145).